A 702-amino-acid chain; its full sequence is ATP-dependent zinc metalloprotease FtsH (702 aa).

Topologically, residues 1–26 (MKKRNKGLVEQTTTEKNNFSRKTAWK) are cytoplasmic. Residues 27–47 (VFWWVIILAVVIGVLAYIFSP) traverse the membrane as a helical segment. Residues 48–175 (RAATAVVESW…FIAPDTRARD (128 aa)) are Extracellular-facing. A helical membrane pass occupies residues 176–196 (VLNGLFGLLPIIIFVVFFLLF). Residues 197 to 702 (WRSARGISAG…EVKPESETNS (506 aa)) are Cytoplasmic-facing. 271–278 (GPPGTGKT) provides a ligand contact to ATP. His493 provides a ligand contact to Zn(2+). The active site involves Glu494. Residues His497 and Asp572 each contribute to the Zn(2+) site. Positions 682 to 702 (EQQAKQKLNKSEVKPESETNS) are disordered. A compositionally biased stretch (basic and acidic residues) spans 690–702 (NKSEVKPESETNS).

It in the central section; belongs to the AAA ATPase family. This sequence in the C-terminal section; belongs to the peptidase M41 family. As to quaternary structure, homohexamer. Zn(2+) serves as cofactor.

The protein resides in the cell membrane. In terms of biological role, acts as a processive, ATP-dependent zinc metallopeptidase for both cytoplasmic and membrane proteins. Plays a role in the quality control of integral membrane proteins. This chain is ATP-dependent zinc metalloprotease FtsH, found in Mycoplasma genitalium (strain ATCC 33530 / DSM 19775 / NCTC 10195 / G37) (Mycoplasmoides genitalium).